Consider the following 403-residue polypeptide: Argininosuccinate synthase (403 aa).

ATP is bound by residues 13-21 (AYSGGLDTS) and alanine 40. L-citrulline is bound by residues tyrosine 92 and serine 97. Position 122 (glycine 122) interacts with ATP. 3 residues coordinate L-aspartate: threonine 124, asparagine 128, and aspartate 129. Residue asparagine 128 participates in L-citrulline binding. The L-citrulline site is built by arginine 132, serine 181, serine 190, glutamate 266, and tyrosine 278.

The protein belongs to the argininosuccinate synthase family. Type 1 subfamily. As to quaternary structure, homotetramer.

The protein resides in the cytoplasm. The catalysed reaction is L-citrulline + L-aspartate + ATP = 2-(N(omega)-L-arginino)succinate + AMP + diphosphate + H(+). It participates in amino-acid biosynthesis; L-arginine biosynthesis; L-arginine from L-ornithine and carbamoyl phosphate: step 2/3. The polypeptide is Argininosuccinate synthase (Aliivibrio fischeri (strain ATCC 700601 / ES114) (Vibrio fischeri)).